An 88-amino-acid polypeptide reads, in one-letter code: Ribonuclease P protein component 1 (88 aa).

It belongs to the eukaryotic/archaeal RNase P protein component 1 family. In terms of assembly, consists of a catalytic RNA component and at least 4-5 protein subunits.

The protein localises to the cytoplasm. It catalyses the reaction Endonucleolytic cleavage of RNA, removing 5'-extranucleotides from tRNA precursor.. Functionally, part of ribonuclease P, a protein complex that generates mature tRNA molecules by cleaving their 5'-ends. The polypeptide is Ribonuclease P protein component 1 (Nitrosopumilus maritimus (strain SCM1)).